The sequence spans 246 residues: MNNNTMAPTYTLRGLQLIGWRDMQHALDYLFADGHLKQGTLVAINAEKMLTIEDNAEVRELINAAEFKYADGISVVRSVRKKYPQAQVSRVAGADLWEELMARAGKEGTPVFLVGGKPEVLAQTEAKLRNQWNVNIVGSQDGYFKPEQRQALFERIHASGAQIVTVAMGSPKQEIFMRDCRLVHPDALYMGVGGTYDVFTGHVKRAPKIWQTLGLEWLYRLLSQPSRIKRQLRLLRYLRWHYTGNL.

This sequence belongs to the glycosyltransferase 26 family.

It catalyses the reaction UDP-N-acetyl-alpha-D-mannosaminouronate + N-acetyl-alpha-D-glucosaminyl-di-trans,octa-cis-undecaprenyl diphosphate = beta-D-ManNAcA-(1-&gt;4)-alpha-D-GlcNAc-di-trans,octa-cis-undecaprenyl diphosphate + UDP + H(+). It functions in the pathway bacterial outer membrane biogenesis; enterobacterial common antigen biosynthesis. Catalyzes the synthesis of Und-PP-GlcNAc-ManNAcA (Lipid II), the second lipid-linked intermediate involved in enterobacterial common antigen (ECA) synthesis. The polypeptide is UDP-N-acetyl-D-mannosaminuronic acid transferase (Escherichia coli (strain 55989 / EAEC)).